Consider the following 247-residue polypeptide: UPF0659 protein C216.03 (247 aa).

This sequence belongs to the UPF0659 family.

The protein resides in the cytoplasm. Its subcellular location is the nucleus. The chain is UPF0659 protein C216.03 from Schizosaccharomyces pombe (strain 972 / ATCC 24843) (Fission yeast).